Reading from the N-terminus, the 314-residue chain is tRNA dimethylallyltransferase (314 aa).

40–47 (GPTASGKS) contacts ATP. 42-47 (TASGKS) lines the substrate pocket.

The protein belongs to the IPP transferase family. As to quaternary structure, monomer. Requires Mg(2+) as cofactor.

The enzyme catalyses adenosine(37) in tRNA + dimethylallyl diphosphate = N(6)-dimethylallyladenosine(37) in tRNA + diphosphate. In terms of biological role, catalyzes the transfer of a dimethylallyl group onto the adenine at position 37 in tRNAs that read codons beginning with uridine, leading to the formation of N6-(dimethylallyl)adenosine (i(6)A). The polypeptide is tRNA dimethylallyltransferase (Cereibacter sphaeroides (strain KD131 / KCTC 12085) (Rhodobacter sphaeroides)).